The following is a 461-amino-acid chain: Photosystem II CP43 reaction center protein (461 aa).

The propeptide occupies 1 to 2 (ME). At Thr-3 the chain carries N-acetylthreonine. Phosphothreonine is present on Thr-3. 5 consecutive transmembrane segments (helical) span residues 57-81 (LFEVAHFVPEKPMYEQGLILLPHLA), 122-143 (LIGPETLEESFPFFGYVWKDKN), 166-188 (KAMYFGGVYDTWAPGGGDVRVIT), 243-263 (KPFAWARRALVWSGEAYLSYS), and 279-300 (WFNNTAYPSEFYGPTGPEASQA). Residue Glu-355 coordinates [CaMn4O5] cluster. The chain crosses the membrane as a helical span at residues 435–459 (RARAAAAGFEKGIERETEPALSMKP).

Belongs to the PsbB/PsbC family. PsbC subfamily. As to quaternary structure, PSII is composed of 1 copy each of membrane proteins PsbA, PsbB, PsbC, PsbD, PsbE, PsbF, PsbH, PsbI, PsbJ, PsbK, PsbL, PsbM, PsbT, PsbX, PsbY, PsbZ, Psb30/Ycf12, at least 3 peripheral proteins of the oxygen-evolving complex and a large number of cofactors. It forms dimeric complexes. Requires Binds multiple chlorophylls and provides some of the ligands for the Ca-4Mn-5O cluster of the oxygen-evolving complex. It may also provide a ligand for a Cl- that is required for oxygen evolution. PSII binds additional chlorophylls, carotenoids and specific lipids. as cofactor.

The protein resides in the plastid. The protein localises to the chloroplast thylakoid membrane. Functionally, one of the components of the core complex of photosystem II (PSII). It binds chlorophyll and helps catalyze the primary light-induced photochemical processes of PSII. PSII is a light-driven water:plastoquinone oxidoreductase, using light energy to abstract electrons from H(2)O, generating O(2) and a proton gradient subsequently used for ATP formation. The polypeptide is Photosystem II CP43 reaction center protein (Chlorokybus atmophyticus (Soil alga)).